The sequence spans 286 residues: 4-diphosphocytidyl-2-C-methyl-D-erythritol kinase (286 aa).

Lys-13 is a catalytic residue. 99-109 provides a ligand contact to ATP; the sequence is PMGGGLGGGSS. Asp-141 is an active-site residue.

It belongs to the GHMP kinase family. IspE subfamily.

The catalysed reaction is 4-CDP-2-C-methyl-D-erythritol + ATP = 4-CDP-2-C-methyl-D-erythritol 2-phosphate + ADP + H(+). Its pathway is isoprenoid biosynthesis; isopentenyl diphosphate biosynthesis via DXP pathway; isopentenyl diphosphate from 1-deoxy-D-xylulose 5-phosphate: step 3/6. Its function is as follows. Catalyzes the phosphorylation of the position 2 hydroxy group of 4-diphosphocytidyl-2C-methyl-D-erythritol. The protein is 4-diphosphocytidyl-2-C-methyl-D-erythritol kinase of Herminiimonas arsenicoxydans.